A 346-amino-acid chain; its full sequence is tRNA N6-adenosine threonylcarbamoyltransferase (346 aa).

Positions 117 and 121 each coordinate Fe cation. Substrate is bound by residues 139–143 (VVSGG), aspartate 172, glycine 185, aspartate 189, and asparagine 278. Residue aspartate 307 coordinates Fe cation.

Belongs to the KAE1 / TsaD family. As to quaternary structure, may form a heterodimer with TsaB. It depends on Fe(2+) as a cofactor.

It localises to the cytoplasm. The catalysed reaction is L-threonylcarbamoyladenylate + adenosine(37) in tRNA = N(6)-L-threonylcarbamoyladenosine(37) in tRNA + AMP + H(+). Required for the formation of a threonylcarbamoyl group on adenosine at position 37 (t(6)A37) in tRNAs that read codons beginning with adenine. Is involved in the transfer of the threonylcarbamoyl moiety of threonylcarbamoyl-AMP (TC-AMP) to the N6 group of A37, together with TsaE and TsaB; this reaction does not require ATP in vitro. TsaD likely plays a direct catalytic role in this reaction. The protein is tRNA N6-adenosine threonylcarbamoyltransferase of Bacillus subtilis (strain 168).